The sequence spans 612 residues: uncharacterized protein (612 aa).

The interval 213–238 (ASAEDGEEAAAGAGKRQVARSGARKR) is disordered. In terms of domain architecture, VWFA spans 421-610 (DLACLLLADL…ERLLQLYRRL (190 aa)).

The protein localises to the cytoplasm. Its function is as follows. Component of the anaerobic respiratory chain that transforms nitrate to dinitrogen (denitrification). Function unknown, but essential for the denitrification process. This is an uncharacterized protein from Pseudomonas aeruginosa (strain ATCC 15692 / DSM 22644 / CIP 104116 / JCM 14847 / LMG 12228 / 1C / PRS 101 / PAO1).